We begin with the raw amino-acid sequence, 164 residues long: Ribosome maturation factor RimP (164 aa).

Belongs to the RimP family.

The protein resides in the cytoplasm. Its function is as follows. Required for maturation of 30S ribosomal subunits. In Cellvibrio japonicus (strain Ueda107) (Pseudomonas fluorescens subsp. cellulosa), this protein is Ribosome maturation factor RimP.